The chain runs to 597 residues: Elongation factor 4 (597 aa).

Positions 2–184 (KNIRNFSIIA…TIVAKVPAPE (183 aa)) constitute a tr-type G domain. GTP contacts are provided by residues 14 to 19 (DHGKST) and 131 to 134 (NKID).

This sequence belongs to the TRAFAC class translation factor GTPase superfamily. Classic translation factor GTPase family. LepA subfamily.

The protein localises to the cell inner membrane. The enzyme catalyses GTP + H2O = GDP + phosphate + H(+). Functionally, required for accurate and efficient protein synthesis under certain stress conditions. May act as a fidelity factor of the translation reaction, by catalyzing a one-codon backward translocation of tRNAs on improperly translocated ribosomes. Back-translocation proceeds from a post-translocation (POST) complex to a pre-translocation (PRE) complex, thus giving elongation factor G a second chance to translocate the tRNAs correctly. Binds to ribosomes in a GTP-dependent manner. In Francisella tularensis subsp. mediasiatica (strain FSC147), this protein is Elongation factor 4.